We begin with the raw amino-acid sequence, 499 residues long: Cytochrome P450 71A9 (499 aa).

Residues 2 to 22 (ISFTVFVFLTLLFTLSLVKQL) form a helical membrane-spanning segment. Cysteine 440 contributes to the heme binding site.

It belongs to the cytochrome P450 family. The cofactor is heme.

It is found in the membrane. This chain is Cytochrome P450 71A9 (CYP71A9), found in Glycine max (Soybean).